The sequence spans 272 residues: Proteasome subunit beta type-5 (272 aa).

A propeptide spans 1 to 62 (MINIDFDNIE…APKALEFAHG (62 aa)) (removed in mature form). Thr-63 functions as the Nucleophile in the catalytic mechanism.

This sequence belongs to the peptidase T1B family. As to quaternary structure, the 26S proteasome consists of a 20S proteasome core and two 19S regulatory subunits. The 20S proteasome core is composed of 28 subunits that are arranged in four stacked rings, resulting in a barrel-shaped structure. The two end rings are each formed by seven alpha subunits, and the two central rings are each formed by seven beta subunits. The catalytic chamber with the active sites is on the inside of the barrel.

It is found in the cytoplasm. Its subcellular location is the nucleus. It catalyses the reaction Cleavage of peptide bonds with very broad specificity.. In terms of biological role, the proteasome is a multicatalytic proteinase complex which is characterized by its ability to cleave peptides with Arg, Phe, Tyr, Leu, and Glu adjacent to the leaving group at neutral or slightly basic pH. The proteasome has an ATP-dependent proteolytic activity. The polypeptide is Proteasome subunit beta type-5 (psmB5) (Dictyostelium discoideum (Social amoeba)).